A 223-amino-acid chain; its full sequence is Deoxyribose-phosphate aldolase (223 aa).

Residue Asp91 is the Proton donor/acceptor of the active site. Residue Lys153 is the Schiff-base intermediate with acetaldehyde of the active site. The active-site Proton donor/acceptor is Lys182.

Belongs to the DeoC/FbaB aldolase family. DeoC type 1 subfamily.

It is found in the cytoplasm. It carries out the reaction 2-deoxy-D-ribose 5-phosphate = D-glyceraldehyde 3-phosphate + acetaldehyde. It functions in the pathway carbohydrate degradation; 2-deoxy-D-ribose 1-phosphate degradation; D-glyceraldehyde 3-phosphate and acetaldehyde from 2-deoxy-alpha-D-ribose 1-phosphate: step 2/2. In terms of biological role, catalyzes a reversible aldol reaction between acetaldehyde and D-glyceraldehyde 3-phosphate to generate 2-deoxy-D-ribose 5-phosphate. This is Deoxyribose-phosphate aldolase from Yersinia pestis bv. Antiqua (strain Angola).